Consider the following 287-residue polypeptide: Hydroxyethylthiazole kinase (287 aa).

Residue Met50 participates in substrate binding. The ATP site is built by Arg126 and Ser185. Gly212 contacts substrate.

The protein belongs to the Thz kinase family. It depends on Mg(2+) as a cofactor.

It carries out the reaction 5-(2-hydroxyethyl)-4-methylthiazole + ATP = 4-methyl-5-(2-phosphooxyethyl)-thiazole + ADP + H(+). It participates in cofactor biosynthesis; thiamine diphosphate biosynthesis; 4-methyl-5-(2-phosphoethyl)-thiazole from 5-(2-hydroxyethyl)-4-methylthiazole: step 1/1. Its function is as follows. Catalyzes the phosphorylation of the hydroxyl group of 4-methyl-5-beta-hydroxyethylthiazole (THZ). In Methanobrevibacter smithii (strain ATCC 35061 / DSM 861 / OCM 144 / PS), this protein is Hydroxyethylthiazole kinase.